A 225-amino-acid chain; its full sequence is 7-cyano-7-deazaguanine synthase (225 aa).

10-20 lines the ATP pocket; the sequence is LSGGIDSATAA. Residues Cys-191, Cys-199, Cys-202, and Cys-205 each coordinate Zn(2+).

The protein belongs to the QueC family. The cofactor is Zn(2+).

It carries out the reaction 7-carboxy-7-deazaguanine + NH4(+) + ATP = 7-cyano-7-deazaguanine + ADP + phosphate + H2O + H(+). Its pathway is purine metabolism; 7-cyano-7-deazaguanine biosynthesis. Catalyzes the ATP-dependent conversion of 7-carboxy-7-deazaguanine (CDG) to 7-cyano-7-deazaguanine (preQ(0)). This chain is 7-cyano-7-deazaguanine synthase, found in Prochlorococcus marinus (strain NATL2A).